Here is a 463-residue protein sequence, read N- to C-terminus: Fumarate hydratase class II (463 aa).

Substrate-binding positions include 97–99 (SGT), 128–131 (HPND), 138–140 (SSN), and threonine 186. Residue histidine 187 is the Proton donor/acceptor of the active site. Residue serine 317 is part of the active site. Substrate contacts are provided by residues serine 318 and 323–325 (KVN).

This sequence belongs to the class-II fumarase/aspartase family. Fumarase subfamily. As to quaternary structure, homotetramer.

Its subcellular location is the cytoplasm. The enzyme catalyses (S)-malate = fumarate + H2O. The protein operates within carbohydrate metabolism; tricarboxylic acid cycle; (S)-malate from fumarate: step 1/1. Involved in the TCA cycle. Catalyzes the stereospecific interconversion of fumarate to L-malate. This is Fumarate hydratase class II from Campylobacter jejuni subsp. jejuni serotype O:2 (strain ATCC 700819 / NCTC 11168).